The chain runs to 1678 residues: MFGQNKSFGSSSFGGGSSGSGLFGQNNQNNQNKGLFGQPANNSGTTGLFGAAQNKPAGSIFGAASNTSSIFGSPQQPQNNQSSLFGGGQNNANRSIFGSTSSAAPASSSLFGNNANNTGTSSIFGSNNNAPSGGGLFGASTVSGTTVKFEPPISSDTMMRNGTTQTISTKHMCISAMSKYDGKSIEELRVEDYIANRKAPGTGTTSTGGGLFGASNTTNQAGSSGLFGSSNAQQKTSLFGGASTSSPFGGNTSTANTGSSLFGNNNANTSAASGSLFGAKPAGSSLFGSTATTGASTFGQTTGSSLFGNQQPQTNTGGSLFGNTQNQNQSGSLFGNTGTTGTGLFGQAQQQPQQQSSGFSFGGAPAATNAFGQPAAANTGGSLFGNTSTANTGSSLFGAKPATSTGFTFGATQPTTTNAFGSTNTGGGLFGNNAAKPGGLFGNTTNTGTGGGLFGSQPQASSGGLFGSNTQATQPLNTGFGNLAQPQIVMQQQVAPVPVIGVTADVLQMQANMKSLKSQLTNAPYGDSPLLKYNANPEIDGKSSPASTQRQLRFLAAKKGALSSSSDAQDSSFIIPPISKVMSDLSPAVTRSADVTKDLNYTSKEAPPSLARGLRNSTFNPNMSLTNRSVHESSALDKTIDSALDASMNGTSNRLGVRGSVRRSNLKQLDMSLLADSSRVGRESRVADPDALPRISESERRQDVVTSTPAVDPVQAVIQRHNDRNRDPPSLNLDTTCDEHTGLEPVSAATSSAASVVSTPSEETVNVNSAAGVKLTKPDYFSLPTINEMKNMIKNGRVVLEDGLTVGRSSYGSVYWPGRVELKDVALDEIVVFRHREVTVYPNEEEKAPEGQELNRPAEVTLERVWYTDKKTKKEVRDVVKLSEIGWREHLERQTIRMGAAFKDFRAETGSWVFRVDHFSKYGLADDDEPMDGSPPQQALQASSPLQVIDMNTSARDVNNQVQRKKVHKATDAHHQEIILERVPAPAALGDVVPIIRRVNRKGLGGGTLDDSREESCIGNMTTEFNESGHDSIIEEGQQPEKKPKLELLADLEYESSRFIRNLQELKVMPKANDPAHRFHGGGHSAKMIGYGKSKLIDIGIVKGRSSHVGWSETGCLVWSAQPRHNQVLFGTIDRTSDVNENTLISMLDVNVHVSETSRKGPSSQSNSVKSSLTSNFVTYSDSYSSMFAKYIDVAQAGGYDGHVSVWKLISALFPYERREGWSFERGEEIGEWLRTEAVKSVPDDRSADTSSNGVWNQLCLGDIDKAFQIAIDNNQPQLATMLQTSAVCPEATVHCFKAQLDNWKKCETLHLIPKETLKCYVLMSGLSHYEWDQDGKNHSINCLDGLNWIQALGLHVWYLRAWTGLEESYDAYQKDVNAGRAASNRGDLPGELIKLACESQHSVEVVLDCAAGENPNDYFLQWHVWSLLYSVGYRTMSKTSETRLHRNYSSQLEASSLSKYALFVLQHIDDDEERSTAVRSLLDRIARFTDNDMFDSISEQFDIPSEWIADAQFSIAKSVDDSTQLFELAVAAKNYLEICRLFVDDIAPTAVVAGDHDALKAACAMVRPFENQIPEWGATGMVYTDYCRLINLIENDAEEELLQDVLESLETRLHAPTISKNSLQKLSLQTIGRVLFEYRADKNTLPEWTKLLGHRQMFKIFRDRSSWGIERFTIEFD.

Low complexity predominate over residues 1-11 (MFGQNKSFGSS). 5 disordered regions span residues 1–41 (MFGQ…QPAN), 68–100 (SSIF…FGST), 301–366 (TTGS…GAPA), 441–473 (FGNT…TQAT), and 603–631 (SKEA…RSVH). The segment covering 12–22 (SFGGGSSGSGL) has biased composition (gly residues). Low complexity-rich tracts occupy residues 23-38 (FGQN…LFGQ) and 73-83 (SPQQPQNNQSS). The segment covering 306–329 (LFGNQQPQTNTGGSLFGNTQNQNQ) has biased composition (polar residues). The segment covering 345 to 366 (FGQAQQQPQQQSSGFSFGGAPA) has biased composition (low complexity). Composition is skewed to polar residues over residues 456–473 (SQPQ…TQAT) and 615–628 (RNST…LTNR). A Peptidase S59 domain is found at 777 to 919 (KPDYFSLPTI…GSWVFRVDHF (143 aa)). Catalysis depends on Ser-920, which acts as the Nucleophile.

It belongs to the nucleoporin GLFG family. Part of the NPC. In terms of processing, the Nup98 and Nup96 chains are autoproteolytically processed from a single precursor protein.

It is found in the cytoplasmic granule. Its subcellular location is the nucleus membrane. It localises to the nucleus. The protein resides in the nuclear pore complex. The protein localises to the nucleus envelope. It is found in the chromosome. Nup98 and Nup96 play a role in the bidirectional transport across the nucleoporin complex (NPC). Required for the nuclear import of hcp-4 during mitotic prophase, this step is essential for centrosome assembly and resolution. Regulates nucleoporin npp-5 localization to the nuclear membrane during interphase and to kinetochores during metaphase. Has a role in P granule integrity; may promote the 'liquid phase' of P granules by increasing the number of interacting RNA-protein complexes. Binds nos-2 mRNA, probably indirectly, and promotes its accumulation in P granules. The chain is Nuclear pore complex protein Nup98-Nup96 from Caenorhabditis elegans.